A 527-amino-acid chain; its full sequence is MSVPTGTKSGFKNKEKPLEVRKSNILAARAVADAIRTSLGPKGMDKMIQTARGQVIISNDGNTILQHMAVMHPAAKMLVDLSASQDSVAGDGTTSVVILAGSLLGAADKLLKKGIHPSIIAENFQKAAQRAAEVVMDMSKPIDLSDRETLIRAASTSLNSKIVSQFSSTLAPMLVDAALQAAKKTPEGGLTLDLNDIRIIKSLGGTIEDTTLANGLVLNNYAVKNAGGPSRMEKAKIGLIQFQLSAPKPDMENHIVVNDYRQMDKILKEERQYILGLAKAIKKSKCNVLLIQKSILRDAVSELALHFLAKLNIMVIKDIERDDIEFISRSTGAKPVADIEAFTEDKLGSCDLVEEVESSGSKTVRFSSREGSNTVSILVRGANDLVIDETERSLHDALCVLRSLFRVPALVPGGGACEVQVAQVIGKESRAMDGASAICYEEFSNAMLVIPTTLAENAGLNPVNVVTELRVRHEKGEVNAGISVRRGTSIMVEEHVIQPALVTTSAITLAAECAKGLLRIDDIAFSR.

This sequence belongs to the TCP-1 chaperonin family. As to quaternary structure, heterooligomeric complex of about 850 to 900 kDa that forms two stacked rings, 12 to 16 nm in diameter.

The protein resides in the cytoplasm. Molecular chaperone; assists the folding of proteins upon ATP hydrolysis. Known to play a role, in vitro, in the folding of actin and tubulin. The chain is T-complex protein 1 subunit delta (CCT4) from Yarrowia lipolytica (strain CLIB 122 / E 150) (Yeast).